The sequence spans 30 residues: Truncated interleukin-1-binding protein (30 aa).

Positions 1 to 18 (MSILPVIFLPIFFYSSFV) are cleaved as a signal peptide.

It belongs to the interleukin-1 receptor family.

This Vaccinia virus (strain Copenhagen) (VACV) protein is Truncated interleukin-1-binding protein.